The chain runs to 227 residues: Cytochrome c oxidase subunit 2 (227 aa).

At 1-14 the chain is on the mitochondrial intermembrane side; the sequence is MACPVQLGFQDAAS. The chain crosses the membrane as a helical span at residues 15 to 45; that stretch reads PIMEELTYFHDHTLMIVFLISSLVLYIISLM. Residues 46 to 59 lie on the Mitochondrial matrix side of the membrane; that stretch reads LTTELTHTSTMDAQ. Residues 60-87 form a helical membrane-spanning segment; the sequence is EVETVWTILPAVILILIALPSLRILYMM. The Mitochondrial intermembrane portion of the chain corresponds to 88-227; sequence DEITTPSLTL…HFEEWLLAML (140 aa). Cu cation contacts are provided by His161, Cys196, Glu198, Cys200, His204, and Met207. Glu198 serves as a coordination point for Mg(2+).

Belongs to the cytochrome c oxidase subunit 2 family. As to quaternary structure, component of the cytochrome c oxidase (complex IV, CIV), a multisubunit enzyme composed of 14 subunits. The complex is composed of a catalytic core of 3 subunits MT-CO1, MT-CO2 and MT-CO3, encoded in the mitochondrial DNA, and 11 supernumerary subunits COX4I, COX5A, COX5B, COX6A, COX6B, COX6C, COX7A, COX7B, COX7C, COX8 and NDUFA4, which are encoded in the nuclear genome. The complex exists as a monomer or a dimer and forms supercomplexes (SCs) in the inner mitochondrial membrane with NADH-ubiquinone oxidoreductase (complex I, CI) and ubiquinol-cytochrome c oxidoreductase (cytochrome b-c1 complex, complex III, CIII), resulting in different assemblies (supercomplex SCI(1)III(2)IV(1) and megacomplex MCI(2)III(2)IV(2)). Found in a complex with TMEM177, COA6, COX18, COX20, SCO1 and SCO2. Interacts with TMEM177 in a COX20-dependent manner. Interacts with COX20. Interacts with COX16. The cofactor is Cu cation.

It is found in the mitochondrion inner membrane. The enzyme catalyses 4 Fe(II)-[cytochrome c] + O2 + 8 H(+)(in) = 4 Fe(III)-[cytochrome c] + 2 H2O + 4 H(+)(out). In terms of biological role, component of the cytochrome c oxidase, the last enzyme in the mitochondrial electron transport chain which drives oxidative phosphorylation. The respiratory chain contains 3 multisubunit complexes succinate dehydrogenase (complex II, CII), ubiquinol-cytochrome c oxidoreductase (cytochrome b-c1 complex, complex III, CIII) and cytochrome c oxidase (complex IV, CIV), that cooperate to transfer electrons derived from NADH and succinate to molecular oxygen, creating an electrochemical gradient over the inner membrane that drives transmembrane transport and the ATP synthase. Cytochrome c oxidase is the component of the respiratory chain that catalyzes the reduction of oxygen to water. Electrons originating from reduced cytochrome c in the intermembrane space (IMS) are transferred via the dinuclear copper A center (CU(A)) of subunit 2 and heme A of subunit 1 to the active site in subunit 1, a binuclear center (BNC) formed by heme A3 and copper B (CU(B)). The BNC reduces molecular oxygen to 2 water molecules using 4 electrons from cytochrome c in the IMS and 4 protons from the mitochondrial matrix. The sequence is that of Cytochrome c oxidase subunit 2 (MT-CO2) from Cheirogaleus medius (Fat-tailed dwarf lemur).